Here is a 471-residue protein sequence, read N- to C-terminus: Putative multidrug resistance protein MdtD (471 aa).

Topologically, residues Met1–Gln11 are periplasmic. Residues Leu12 to Ala32 form a helical membrane-spanning segment. Residues Leu33–His48 are Cytoplasmic-facing. A helical transmembrane segment spans residues Met49–Ala69. Residues Asp70 to Asn76 lie on the Periplasmic side of the membrane. Residues Ile77–Thr97 traverse the membrane as a helical segment. Residues Leu98–Leu101 lie on the Cytoplasmic side of the membrane. The helical transmembrane segment at Leu102–Met124 threads the bilayer. At Lys125–Thr137 the chain is on the periplasmic side. Residues Phe138 to Val158 form a helical membrane-spanning segment. At Glu159–His164 the chain is on the cytoplasmic side. The chain crosses the membrane as a helical span at residues Trp165–Met185. Over Pro186 to Asp196 the chain is Periplasmic. The helical transmembrane segment at Leu197–Ser217 threads the bilayer. The Cytoplasmic segment spans residues Lys218–Pro224. A helical membrane pass occupies residues Leu225–Ala245. Topologically, residues Arg246–Thr262 are periplasmic. The helical transmembrane segment at Phe263–Met283 threads the bilayer. Residues Thr284–Pro285 are Cytoplasmic-facing. Residues Val286–Met306 form a helical membrane-spanning segment. Residues Val307 to Thr341 lie on the Periplasmic side of the membrane. A helical transmembrane segment spans residues Leu342–Leu362. Residues Gln363 to Ser395 lie on the Cytoplasmic side of the membrane. Residues Met396–Phe416 form a helical membrane-spanning segment. Residues Gly417–Thr430 lie on the Periplasmic side of the membrane. A helical transmembrane segment spans residues Val431–Ala451. Over Arg452–Gln471 the chain is Cytoplasmic.

It belongs to the major facilitator superfamily. TCR/Tet family.

It localises to the cell inner membrane. This is Putative multidrug resistance protein MdtD from Shigella boydii serotype 4 (strain Sb227).